Here is a 64-residue protein sequence, read N- to C-terminus: Neurotoxin lambda-MeuTx (64 aa).

The N-terminal stretch at 1–18 (MSTFIVVFLLLTAILCHA) is a signal peptide. A propeptide spanning residues 19 to 27 (EHAIDETAR) is cleaved from the precursor. Disulfide bonds link C29-C43, C36-C49, and C42-C58.

This sequence belongs to the scorpion calcin-like family. Expressed by the venom gland.

It is found in the secreted. Functionally, voltage-gated potassium channel (Kv) inhibitor. In addition it may increase intracellular calcium release through the activation of nuclear inositol 1,4,5-trisphosphate receptors (ITPR) of cardiomyocytes, thereby causing an increase in the contraction frequency of these cells. The protein is Neurotoxin lambda-MeuTx of Mesobuthus eupeus (Lesser Asian scorpion).